The chain runs to 727 residues: Protein TITANIA (727 aa).

The disordered stretch occupies residues 1–136 (MFGDSDGSKD…LASLLQPVPA (136 aa)). The span at 14–25 (GAPPSTTDPPFP) shows a compositional bias: pro residues. Over residues 67 to 88 (DDGKHCVERDFLHLSAPKRGDP) the composition is skewed to basic and acidic residues. The span at 104–117 (DSLQLSLSLNSDGP) shows a compositional bias: low complexity. A PHD-type zinc finger spans residues 406–470 (ACTCSVCHKF…QFQCLACNHS (65 aa)). A coiled-coil region spans residues 629 to 697 (VKCKEAEAKL…LEELKMLENS (69 aa)).

Widely expressed.

The protein resides in the nucleus. In terms of biological role, probable transcription factor that functions as a regulator of metal transporter genes responsible for essential metals delivery to shoots and normal plant growth. Required for the maintenance of metal transporter gene expression, such as IRT1, IRT2, ZIP1, ZIP9, NRAMP1 and NRAMP5. In Oryza sativa subsp. japonica (Rice), this protein is Protein TITANIA.